Here is a 205-residue protein sequence, read N- to C-terminus: N-(5'-phosphoribosyl)anthranilate isomerase (205 aa).

The protein belongs to the TrpF family.

It carries out the reaction N-(5-phospho-beta-D-ribosyl)anthranilate = 1-(2-carboxyphenylamino)-1-deoxy-D-ribulose 5-phosphate. Its pathway is amino-acid biosynthesis; L-tryptophan biosynthesis; L-tryptophan from chorismate: step 3/5. In Zygosaccharomyces bailii, this protein is N-(5'-phosphoribosyl)anthranilate isomerase (TRP1).